An 850-amino-acid polypeptide reads, in one-letter code: Mitogen-activated protein kinase kinase kinase 11 (850 aa).

The residue at position 11 (S11) is a Phosphoserine. The segment covering 18–31 has biased composition (gly residues); sequence GSGSGGGGGSGGVR. The tract at residues 18 to 37 is disordered; the sequence is GSGSGGGGGSGGVRPEGSPK. Position 35 is a phosphoserine (S35). One can recognise an SH3 domain in the interval 42–106; that stretch reads YANPVWTALF…PSNYVSRGGG (65 aa). Positions 118–380 constitute a Protein kinase domain; that stretch reads LRLEEVIGIG…ASILQQLEAL (263 aa). Residues 124 to 132 and K145 each bind ATP; that span reads IGIGGFGKV. Residue D242 is the Proton acceptor of the active site. Residue T278 is modified to Phosphothreonine; by autocatalysis. Position 282 is a phosphoserine; by autocatalysis and MAP4K1 (S282). Position 395 is a phosphoserine (S395). Leucine-zipper regions lie at residues 404 to 425 and 439 to 460; these read IQGL…EEEL and LRRR…ELTL. Phosphoserine is present on residues S508, S525, S549, S556, and S557. The segment at 536–850 is disordered; it reads LEPAESGQTW…QAPWAPEAGP (315 aa). Over residues 551-563 the composition is skewed to basic and acidic residues; that stretch reads RRLDDSSNGERRA. The segment covering 598–610 has biased composition (low complexity); that stretch reads SSPLGSPSTPPAL. S655 carries the phosphoserine modification. Residues 677–693 show a composition bias toward pro residues; the sequence is TAPPPAQMASPCPPDLP. T712 is modified (phosphothreonine). Residues S728, S731, S743, S751, S761, S773, S792, S796, and S818 each carry the phosphoserine modification. The segment covering 790-802 has biased composition (pro residues); it reads RPSPLPSPQPAPR. Low complexity predominate over residues 803 to 819; it reads RAPWTLFPDSDPFWDSP.

It belongs to the protein kinase superfamily. STE Ser/Thr protein kinase family. MAP kinase kinase kinase subfamily. As to quaternary structure, homodimer; undergoes dimerization during activation. Interacts with MAP2K4/MKK4. Interacts with MAP2K7/MKK7. Found in a complex with SH3RF1, RAC1, MAP2K7/MKK7, MAPK8IP1/JIP1 and MAPK8/JNK1. Mg(2+) is required as a cofactor. Autophosphorylation on serine and threonine residues within the activation loop plays a role in enzyme activation. Thr-278 is likely to be the main autophosphorylation site. Phosphorylation of Ser-556 and Ser-557 is induced by CDC42.

It localises to the cytoplasm. The protein localises to the cytoskeleton. Its subcellular location is the microtubule organizing center. The protein resides in the centrosome. It carries out the reaction L-seryl-[protein] + ATP = O-phospho-L-seryl-[protein] + ADP + H(+). The catalysed reaction is L-threonyl-[protein] + ATP = O-phospho-L-threonyl-[protein] + ADP + H(+). Its activity is regulated as follows. Homodimerization via the leucine zipper domains is required for autophosphorylation and subsequent activation. Activates the JUN N-terminal pathway. Required for serum-stimulated cell proliferation and for mitogen and cytokine activation of MAPK14 (p38), MAPK3 (ERK) and MAPK8 (JNK1) through phosphorylation and activation of MAP2K4/MKK4 and MAP2K7/MKK7. Plays a role in mitogen-stimulated phosphorylation and activation of BRAF, but does not phosphorylate BRAF directly. Influences microtubule organization during the cell cycle. This Rattus norvegicus (Rat) protein is Mitogen-activated protein kinase kinase kinase 11 (Map3k11).